The following is a 259-amino-acid chain: Probable UMP-CMP kinase 2 (259 aa).

Residue G63–T68 coordinates ATP. The interval S83–V112 is NMP. Residues R89, K110–V112, and G137–R140 each bind a ribonucleoside 5'-phosphate. N144 provides a ligand contact to CMP. An LID region spans residues N175–D183. Residue R176 coordinates ATP. Positions 180 and 191 each coordinate a ribonucleoside 5'-phosphate. G219 provides a ligand contact to ATP.

The protein belongs to the adenylate kinase family. UMP-CMP kinase subfamily. As to quaternary structure, monomer. Mg(2+) is required as a cofactor.

The protein resides in the cytoplasm. It localises to the nucleus. It carries out the reaction CMP + ATP = CDP + ADP. The enzyme catalyses dCMP + ATP = dCDP + ADP. It catalyses the reaction UMP + ATP = UDP + ADP. Its function is as follows. Catalyzes the phosphorylation of pyrimidine nucleoside monophosphates at the expense of ATP. Plays an important role in de novo pyrimidine nucleotide biosynthesis. Has preference for UMP and CMP as phosphate acceptors. This Arabidopsis thaliana (Mouse-ear cress) protein is Probable UMP-CMP kinase 2 (UMK2).